The primary structure comprises 418 residues: MTYLEIEGTNHLSGNVTISGAKNAALPLIVSSILAKNEVKINNVPNVADIKTLISLLENLGAKVNFQNNSALLNTNTLNQTIAKYDIVRKMRASILTLGPLLARFGHCEVSLPGGCAIGQRPIDLHLLALEKMGANIQIKQGYVVASGNLKGNEILFDKITVTGSENIIMAAALAKGKTKLLNVAKEPEVVQLCEVLKDAGLEIKGIGTDELEIYGTDGELLEFKEFSVIPDRIEAGTYLCAGAITNSKITLDKVNATHLSAVLAKLHQMGFETLIAEDSITLLPAKEIKPVEIMTSEYPGFPTDMQAQFMALALKANGTSIIDERLFENRFMHVSELLRMGADIKLNGHIATIVGGKELNAADVMATDLRASSALILAALAAKGTSKVHRIYHLDRGYENLEEKFKGLGAKITRLEE.

Residue 22–23 (KN) coordinates phosphoenolpyruvate. R92 is a UDP-N-acetyl-alpha-D-glucosamine binding site. Residue C116 is the Proton donor of the active site. 2-(S-cysteinyl)pyruvic acid O-phosphothioketal is present on C116. UDP-N-acetyl-alpha-D-glucosamine-binding positions include 121-125 (RPIDL), D305, and L327.

The protein belongs to the EPSP synthase family. MurA subfamily.

Its subcellular location is the cytoplasm. The catalysed reaction is phosphoenolpyruvate + UDP-N-acetyl-alpha-D-glucosamine = UDP-N-acetyl-3-O-(1-carboxyvinyl)-alpha-D-glucosamine + phosphate. Its pathway is cell wall biogenesis; peptidoglycan biosynthesis. Functionally, cell wall formation. Adds enolpyruvyl to UDP-N-acetylglucosamine. This Campylobacter jejuni subsp. jejuni serotype O:6 (strain 81116 / NCTC 11828) protein is UDP-N-acetylglucosamine 1-carboxyvinyltransferase.